The sequence spans 248 residues: tRNA uridine(34) hydroxylase (248 aa).

The Rhodanese domain maps to 127 to 221 (RGRPLVLLDT…YFEEVGGEGY (95 aa)). C181 (cysteine persulfide intermediate) is an active-site residue.

The protein belongs to the TrhO family.

It carries out the reaction uridine(34) in tRNA + AH2 + O2 = 5-hydroxyuridine(34) in tRNA + A + H2O. Functionally, catalyzes oxygen-dependent 5-hydroxyuridine (ho5U) modification at position 34 in tRNAs. The polypeptide is tRNA uridine(34) hydroxylase (Xanthomonas euvesicatoria pv. vesicatoria (strain 85-10) (Xanthomonas campestris pv. vesicatoria)).